Here is a 391-residue protein sequence, read N- to C-terminus: D-xylose 1-dehydrogenase (NADP(+)) (391 aa).

This sequence belongs to the Gfo/Idh/MocA family.

It catalyses the reaction D-xylose + NADP(+) = D-xylono-1,5-lactone + NADPH + H(+). Functionally, NADP-dependent D-xylose dehydrogenase catalyzing the oxydation of D-xylose into D-xylonolactone. Also displays some, albeit lower activity with D-glucose, D-galactose and L-arabinose as substrate. Probably not involved in D-xylose degradation, as it has been shown that H.jecorina assimilates D-xylose via D-xylose reductase and xylitol dehydrogenase, and it is unable to grow on D-xylonic acid as sole carbon source. May play a role in the regeneration of NADP(+) in the presence of D-xylose. This Hypocrea jecorina (strain ATCC 56765 / BCRC 32924 / NRRL 11460 / Rut C-30) (Trichoderma reesei) protein is D-xylose 1-dehydrogenase (NADP(+)).